Reading from the N-terminus, the 200-residue chain is Phycocyanobilin lyase subunit beta (200 aa).

This sequence belongs to the CpcE/RpcE/PecE family. As to quaternary structure, cpcE and CpcF associate to form a lyase.

Its function is as follows. Required for the chromophorylation of the CpcA gene product. This is Phycocyanobilin lyase subunit beta (cpcF) from Nostoc sp. (strain PCC 7120 / SAG 25.82 / UTEX 2576).